The primary structure comprises 556 residues: Polypeptide N-acetylgalactosaminyltransferase 13 (556 aa).

Residues 1–4 (MRRF) lie on the Cytoplasmic side of the membrane. Residues 5 to 27 (VYCKVVLATSLMWVLVDVFLLLY) form a helical; Signal-anchor for type II membrane protein membrane-spanning segment. The Lumenal portion of the chain corresponds to 28–556 (FSECNKCDDK…WLLRNMTLGT (529 aa)). Residues N94 and N116 are each glycosylated (N-linked (GlcNAc...) asparagine). 5 disulfide bridges follow: C105-C338, C329-C407, C441-C458, C481-C496, and C522-C539. The segment at 114–224 (LPNTSVVIVF…LGWLEPLLAR (111 aa)) is catalytic subdomain A. Residues D155 and R185 each coordinate substrate. Mn(2+)-binding residues include D208 and H210. Residues 284–346 (PVRTPTMAGG…TCSHVGHVFR (63 aa)) form a catalytic subdomain B region. W315 is a binding site for substrate. Residue H343 participates in Mn(2+) binding. Substrate contacts are provided by R346 and Y351. Residues 428–550 (YSLGEIRNVE…GSRSQQWLLR (123 aa)) enclose the Ricin B-type lectin domain. N551 is a glycosylation site (N-linked (GlcNAc...) asparagine).

Belongs to the glycosyltransferase 2 family. GalNAc-T subfamily. Mn(2+) is required as a cofactor. In terms of tissue distribution, specifically expressed in neuronal cells. Expressed in fetal brain, whole adult brain, cerebral cortex and cerebellum. Not expressed in other tissues tested.

The protein resides in the golgi apparatus membrane. The catalysed reaction is L-seryl-[protein] + UDP-N-acetyl-alpha-D-galactosamine = a 3-O-[N-acetyl-alpha-D-galactosaminyl]-L-seryl-[protein] + UDP + H(+). It catalyses the reaction L-threonyl-[protein] + UDP-N-acetyl-alpha-D-galactosamine = a 3-O-[N-acetyl-alpha-D-galactosaminyl]-L-threonyl-[protein] + UDP + H(+). It participates in protein modification; protein glycosylation. In terms of biological role, catalyzes the initial reaction in O-linked oligosaccharide biosynthesis, the transfer of an N-acetyl-D-galactosamine (GalNAc) residue from UDP-GalNAc to a serine or threonine residue on the protein receptor. Generates GalNAc-O-Ser/Thr structure also known as Tn antigen, which itself is immunogenic but also serves as a precursor for the synthesis of different mucin-type O-glycan core structures. Contributes to the synthesis of O-linked glycans on mucins and proteoglycans of the central nervous system. May promote neurogenesis through glycosylation and stabilization of PDPN. Can glycosylate both unmodified peptides and glycopeptides that already contain an O-linked GalNAc sugar. Transfers GalNAc to Thr-/Ser-rich tandem repeats GTTPSPVPTTSTTSAP of MUC5AC, specifically on Thr-3 of non-glycosylated MUC5AC peptide, on Thr-12 and Thr-13 of preglycosylated MUC5AC at Thr-3 (MUC5AC-3), on Thr-3 of preglycosylated MUC5AC at Thr-13 (MUC5AC-13) and on Thr-12 of preglycosylated MUC5AC at Thr-3 and Thr-13 (MUC5AC-3,13). Transfers GalNAc to three consecutive serine/threonine residues on SDC3 forming a triplet-Tn epitope expressed in Purkinje cells of the developing brain. Functionally, can glycosylate both unmodified peptides and glycopeptides that already contain an O-linked GalNAc sugar. Transfers GalNAc to Thr-/Ser-rich tandem repeats GTTPSPVPTTSTTSAP of MUC5AC, specifically on Thr-3 of non-glycosylated MUC5AC peptide, on Thr-12 and Thr-13 of preglycosylated MUC5AC at Thr-3 (MUC5AC-3), on Thr-3 of preglycosylated MUC5AC at Thr-13 (MUC5AC-13) and on Thr-12 of preglycosylated MUC5AC at Thr-3 and Thr-13 (MUC5AC-3,13). The chain is Polypeptide N-acetylgalactosaminyltransferase 13 (GALNT13) from Homo sapiens (Human).